We begin with the raw amino-acid sequence, 398 residues long: Pectate lyase 1 (398 aa).

The first 25 residues, 1–25, serve as a signal peptide directing secretion; the sequence is MGIKHCCYILYFTLALVTLLQPVRS. N-linked (GlcNAc...) asparagine glycosylation is present at N37. C55 and C72 form a disulfide bridge. Ca(2+)-binding residues include D195, D219, and D223. The active site involves R275.

This sequence belongs to the polysaccharide lyase 1 family. Amb a subfamily. Monomer. Ca(2+) is required as a cofactor. The N-terminus is blocked. In terms of tissue distribution, pollen and flowers.

It carries out the reaction Eliminative cleavage of (1-&gt;4)-alpha-D-galacturonan to give oligosaccharides with 4-deoxy-alpha-D-galact-4-enuronosyl groups at their non-reducing ends.. It functions in the pathway glycan metabolism; pectin degradation; 2-dehydro-3-deoxy-D-gluconate from pectin: step 2/5. Its function is as follows. Has pectate lyase activity. This is Pectate lyase 1 from Ambrosia artemisiifolia (Common ragweed).